Here is a 440-residue protein sequence, read N- to C-terminus: Probable circularly permuted 1,3-beta-glucanase (440 aa).

Positions 1–20 (MHYSLFFGAALAASVSTVSA) are cleaved as a signal peptide. Positions 100-112 (GEKPKRELKPSIH) are enriched in basic and acidic residues. 2 disordered regions span residues 100-126 (GEKP…FHEK) and 153-195 (PAAP…VAPG). A compositionally biased stretch (basic residues) spans 113 to 125 (ERRHGHSHQRFHE). Positions 153–164 (PAAPTSAPGAPG) are enriched in low complexity. Over residues 177-186 (GGDKPKDPKP) the composition is skewed to basic and acidic residues. Positions 350-355 (EFDVLE) match the ExDxxE motif motif.

Belongs to the PGA52 family.

Its subcellular location is the secreted. It catalyses the reaction Hydrolysis of (1-&gt;3)-beta-D-glucosidic linkages in (1-&gt;3)-beta-D-glucans.. Functionally, probable circularly permuted 1,3-beta-glucanase involved in cell wall modification through beta-1,3-glucan network alterations such as increased branching or remodeling. This chain is Probable circularly permuted 1,3-beta-glucanase, found in Arthroderma benhamiae (strain ATCC MYA-4681 / CBS 112371) (Trichophyton mentagrophytes).